The sequence spans 460 residues: Diguanylate cyclase DosC (460 aa).

H98 provides a ligand contact to heme. Residues 325-458 (TPLSVLIIDV…GRNRVELWKA (134 aa)) form the GGDEF domain. Mg(2+) is bound at residue D333. The substrate site is built by N341 and D350. D376 serves as a coordination point for Mg(2+). D376 serves as the catalytic Proton acceptor.

Heme is required as a cofactor. Requires Mg(2+) as cofactor.

The catalysed reaction is 2 GTP = 3',3'-c-di-GMP + 2 diphosphate. The protein operates within purine metabolism; 3',5'-cyclic di-GMP biosynthesis. Functionally, globin-coupled heme-based oxygen sensor protein displaying diguanylate cyclase (DGC) activity in response to oxygen availability. Thus, catalyzes the synthesis of cyclic diguanylate (c-di-GMP) via the condensation of 2 GTP molecules. Cyclic-di-GMP is a second messenger which controls cell surface-associated traits in bacteria. The polypeptide is Diguanylate cyclase DosC (dosC) (Shigella boydii serotype 4 (strain Sb227)).